Consider the following 97-residue polypeptide: Mapk-regulated corepressor-interacting protein 1 (97 aa).

Disordered regions lie at residues 1–29 and 72–97; these read MTSS…NEIF and SNSL…PKKS. Polar residues predominate over residues 17–28; sequence ASNTRSPSSNEI. The span at 82-97 shows a compositional bias: basic and acidic residues; that stretch reads DLNDLKRRTVQDPKKS.

Belongs to the MCRIP family.

The protein localises to the nucleus. The protein resides in the cytoplasm. It localises to the stress granule. Functionally, may play a role in the regulation of the epithelial-mesenchymal transition. This chain is Mapk-regulated corepressor-interacting protein 1 (Mcrip1), found in Xenopus tropicalis (Western clawed frog).